The primary structure comprises 426 residues: Isocitrate dehydrogenase [NADP] (426 aa).

Positions 123, 125, 129, 139, and 162 each coordinate D-threo-isocitrate. Residue D312 coordinates Mg(2+). Residues 344-350, N357, and K404 contribute to the NADP(+) site; that span reads HGTAWDI.

This sequence belongs to the isocitrate and isopropylmalate dehydrogenases family. In terms of assembly, homodimer. It depends on Mg(2+) as a cofactor. Mn(2+) is required as a cofactor.

The enzyme catalyses D-threo-isocitrate + NADP(+) = 2-oxoglutarate + CO2 + NADPH. In terms of biological role, catalyzes the oxidative decarboxylation of isocitrate to 2-oxoglutarate and carbon dioxide with the concomitant reduction of NADP(+). The chain is Isocitrate dehydrogenase [NADP] (icd) from Aquifex aeolicus (strain VF5).